A 1134-amino-acid polypeptide reads, in one-letter code: Tyrosine-protein kinase receptor Tie-1 (1134 aa).

A signal peptide spans 1–22; it reads MVWWGSSLLLPTLFLASHVGAS. The Extracellular portion of the chain corresponds to 23-755; sequence VDLTLLANLR…SRAAEEGLDQ (733 aa). The Ig-like C2-type 1 domain occupies 43–123; that stretch reads CVSGEAGAGR…VLYVHNSPGA (81 aa). N-linked (GlcNAc...) asparagine glycosylation is found at asparagine 81 and asparagine 159. EGF-like domains are found at residues 212-254, 256-301, and 303-343; these read GCGA…TRCE, ACRE…SQCQ, and ACAP…VHCE. Disulfide bonds link cysteine 226–cysteine 235, cysteine 229–cysteine 242, cysteine 244–cysteine 253, cysteine 266–cysteine 276, cysteine 270–cysteine 289, cysteine 291–cysteine 300, cysteine 313–cysteine 325, cysteine 319–cysteine 331, and cysteine 333–cysteine 342. The Ig-like C2-type 2 domain maps to 349 to 440; it reads PQILSMATEV…GQDSRRFKVN (92 aa). 3 Fibronectin type-III domains span residues 444 to 543, 546 to 638, and 642 to 736; these read PPVP…CPEP, QPWL…LPPS, and APRH…LGNG. Residues asparagine 501, asparagine 592, and asparagine 705 are each glycosylated (N-linked (GlcNAc...) asparagine). The helical transmembrane segment at 756–780 threads the bilayer; it reads QLVLAVVGSVSATCLTILAALLALV. At 781–1134 the chain is on the cytoplasmic side; the sequence is CIRRSCLHRR…AGIDATAEEA (354 aa). The Protein kinase domain occupies 835-1114; sequence ITFEDLIGEG…RMLEARKAYV (280 aa). Residues 841–849 and lysine 866 contribute to the ATP site; that span reads IGEGNFGQV. Catalysis depends on aspartate 975, which acts as the Proton acceptor. The residue at position 1003 (tyrosine 1003) is a Phosphotyrosine; by autocatalysis.

Belongs to the protein kinase superfamily. Tyr protein kinase family. Tie subfamily. Heterodimer with TEK/TIE2. Interacts with SVEP1 (via C-terminus). Phosphorylated on tyrosine residues in response to ANGPT1, most likely by TEK/TIE2. Specifically expressed in developing vascular endothelial cells. Abundantly expressed in lung and heart, moderately in brain, liver and kidney, and weakly in thymus, spleen and testis.

The protein localises to the cell membrane. It carries out the reaction L-tyrosyl-[protein] + ATP = O-phospho-L-tyrosyl-[protein] + ADP + H(+). Functionally, transmembrane tyrosine-protein kinase that may modulate TEK/TIE2 activity and contribute to the regulation of angiogenesis. The protein is Tyrosine-protein kinase receptor Tie-1 (Tie1) of Mus musculus (Mouse).